A 468-amino-acid chain; its full sequence is Zinc finger CCCH domain-containing protein 32 (468 aa).

The interval 1–25 (MYARNPPLNGSQSAQAPDWTPADAD) is disordered. C3H1-type zinc fingers lie at residues 45 to 73 (RPGA…HPRD), 90 to 118 (RFGE…HPKN), 136 to 164 (REGD…HPQP), 289 to 317 (RPGE…HPRD), and 335 to 363 (RPGV…HPMG).

The protein resides in the nucleus. The protein is Zinc finger CCCH domain-containing protein 32 of Arabidopsis thaliana (Mouse-ear cress).